Reading from the N-terminus, the 409-residue chain is Elongation factor Tu (409 aa).

Residues 10–214 enclose the tr-type G domain; the sequence is KPHVNVGTIG…AVDNYIPTPE (205 aa). A G1 region spans residues 19 to 26; the sequence is GHVDHGKT. 19-26 is a GTP binding site; that stretch reads GHVDHGKT. Thr-26 provides a ligand contact to Mg(2+). A G2 region spans residues 60–64; the sequence is GITIN. The interval 81–84 is G3; that stretch reads DCPG. GTP is bound by residues 81–85 and 136–139; these read DCPGH and NKVD. The segment at 136 to 139 is G4; sequence NKVD. The interval 174 to 176 is G5; it reads SGL.

Belongs to the TRAFAC class translation factor GTPase superfamily. Classic translation factor GTPase family. EF-Tu/EF-1A subfamily. As to quaternary structure, monomer.

The protein resides in the cytoplasm. It catalyses the reaction GTP + H2O = GDP + phosphate + H(+). Its function is as follows. GTP hydrolase that promotes the GTP-dependent binding of aminoacyl-tRNA to the A-site of ribosomes during protein biosynthesis. In Thermosynechococcus vestitus (strain NIES-2133 / IAM M-273 / BP-1), this protein is Elongation factor Tu.